Reading from the N-terminus, the 430-residue chain is Adenylosuccinate synthetase (430 aa).

Residues 12-18 (GDEGKGK) and 40-42 (GHT) contribute to the GTP site. The active-site Proton acceptor is the D13. Residues D13 and G40 each coordinate Mg(2+). Residues 13–16 (DEGK), 38–41 (NAGH), T128, R142, Q223, T238, and R302 contribute to the IMP site. H41 (proton donor) is an active-site residue. Residue 298–304 (TTTGRPR) coordinates substrate. Residues R304, 330–332 (SID), and 412–414 (SVG) each bind GTP.

The protein belongs to the adenylosuccinate synthetase family. As to quaternary structure, homodimer. Mg(2+) is required as a cofactor.

Its subcellular location is the cytoplasm. It carries out the reaction IMP + L-aspartate + GTP = N(6)-(1,2-dicarboxyethyl)-AMP + GDP + phosphate + 2 H(+). The protein operates within purine metabolism; AMP biosynthesis via de novo pathway; AMP from IMP: step 1/2. Its function is as follows. Plays an important role in the de novo pathway of purine nucleotide biosynthesis. Catalyzes the first committed step in the biosynthesis of AMP from IMP. This Streptococcus equi subsp. equi (strain 4047) protein is Adenylosuccinate synthetase.